Consider the following 439-residue polypeptide: tRNA modification GTPase MnmE (439 aa).

Residues R24, E81, and K121 each coordinate (6S)-5-formyl-5,6,7,8-tetrahydrofolate. Residues 218 to 363 (GFKVVIAGAP…LRDLIGRVVK (146 aa)) enclose the TrmE-type G domain. N228 is a K(+) binding site. Residues 228–233 (NAGKSS), 247–253 (TDIAGTT), and 272–275 (DTAG) each bind GTP. S232 serves as a coordination point for Mg(2+). K(+) contacts are provided by T247, I249, and T252. T253 is a Mg(2+) binding site. K439 is a (6S)-5-formyl-5,6,7,8-tetrahydrofolate binding site.

This sequence belongs to the TRAFAC class TrmE-Era-EngA-EngB-Septin-like GTPase superfamily. TrmE GTPase family. As to quaternary structure, homodimer. Heterotetramer of two MnmE and two MnmG subunits. K(+) is required as a cofactor.

It localises to the cytoplasm. Exhibits a very high intrinsic GTPase hydrolysis rate. Involved in the addition of a carboxymethylaminomethyl (cmnm) group at the wobble position (U34) of certain tRNAs, forming tRNA-cmnm(5)s(2)U34. The protein is tRNA modification GTPase MnmE of Rhizobium etli (strain CIAT 652).